A 661-amino-acid chain; its full sequence is Zinc finger protein 81 (661 aa).

One can recognise a KRAB domain in the interval Val-21–Ser-92. Lys-266 participates in a covalent cross-link: Glycyl lysine isopeptide (Lys-Gly) (interchain with G-Cter in SUMO2). C2H2-type zinc fingers lie at residues Tyr-330 to His-352, Tyr-358 to His-380, Phe-386 to His-408, His-414 to His-436, Tyr-442 to His-464, Tyr-470 to His-492, Tyr-498 to His-520, Tyr-526 to His-548, Tyr-554 to His-576, Tyr-582 to His-604, Tyr-610 to His-632, and Tyr-638 to His-660.

Belongs to the krueppel C2H2-type zinc-finger protein family.

The protein localises to the nucleus. In terms of biological role, may be involved in transcriptional regulation. The sequence is that of Zinc finger protein 81 (ZNF81) from Homo sapiens (Human).